Here is a 48-residue protein sequence, read N- to C-terminus: Small, acid-soluble spore protein P (48 aa).

Basic and acidic residues predominate over residues 1 to 12 (MTNKNDSKDMRK). The disordered stretch occupies residues 1 to 48 (MTNKNDSKDMRKNVSKGDNPGQPEPLDGSKKVKNRNHTRQKHNTSHDM). Basic residues predominate over residues 31–48 (KVKNRNHTRQKHNTSHDM).

The protein belongs to the SspP family.

It localises to the spore core. The protein is Small, acid-soluble spore protein P of Geobacillus thermodenitrificans (strain NG80-2).